A 475-amino-acid chain; its full sequence is Ribulose bisphosphate carboxylase large chain (475 aa).

Residues 1–2 constitute a propeptide that is removed on maturation; that stretch reads MS. An N-acetylproline modification is found at Pro3. Residues Asn123 and Thr173 each contribute to the substrate site. Residue Lys175 is the Proton acceptor of the active site. Position 177 (Lys177) interacts with substrate. The Mg(2+) site is built by Lys201, Asp203, and Glu204. Lys201 is subject to N6-carboxylysine. His294 functions as the Proton acceptor in the catalytic mechanism. Substrate is bound by residues Arg295, His327, and Ser379.

This sequence belongs to the RuBisCO large chain family. Type I subfamily. In terms of assembly, heterohexadecamer of 8 large chains and 8 small chains; disulfide-linked. The disulfide link is formed within the large subunit homodimers. Mg(2+) is required as a cofactor. The disulfide bond which can form in the large chain dimeric partners within the hexadecamer appears to be associated with oxidative stress and protein turnover.

Its subcellular location is the plastid. The protein localises to the chloroplast. The enzyme catalyses 2 (2R)-3-phosphoglycerate + 2 H(+) = D-ribulose 1,5-bisphosphate + CO2 + H2O. It carries out the reaction D-ribulose 1,5-bisphosphate + O2 = 2-phosphoglycolate + (2R)-3-phosphoglycerate + 2 H(+). In terms of biological role, ruBisCO catalyzes two reactions: the carboxylation of D-ribulose 1,5-bisphosphate, the primary event in carbon dioxide fixation, as well as the oxidative fragmentation of the pentose substrate in the photorespiration process. Both reactions occur simultaneously and in competition at the same active site. This is Ribulose bisphosphate carboxylase large chain from Welwitschia mirabilis (Tree tumbo).